The sequence spans 173 residues: Crossover junction endodeoxyribonuclease RuvC (173 aa).

Active-site residues include D8, E67, and D139. Residues D8, E67, and D139 each contribute to the Mg(2+) site.

This sequence belongs to the RuvC family. Homodimer which binds Holliday junction (HJ) DNA. The HJ becomes 2-fold symmetrical on binding to RuvC with unstacked arms; it has a different conformation from HJ DNA in complex with RuvA. In the full resolvosome a probable DNA-RuvA(4)-RuvB(12)-RuvC(2) complex forms which resolves the HJ. The cofactor is Mg(2+).

It is found in the cytoplasm. It carries out the reaction Endonucleolytic cleavage at a junction such as a reciprocal single-stranded crossover between two homologous DNA duplexes (Holliday junction).. The RuvA-RuvB-RuvC complex processes Holliday junction (HJ) DNA during genetic recombination and DNA repair. Endonuclease that resolves HJ intermediates. Cleaves cruciform DNA by making single-stranded nicks across the HJ at symmetrical positions within the homologous arms, yielding a 5'-phosphate and a 3'-hydroxyl group; requires a central core of homology in the junction. The consensus cleavage sequence is 5'-(A/T)TT(C/G)-3'. Cleavage occurs on the 3'-side of the TT dinucleotide at the point of strand exchange. HJ branch migration catalyzed by RuvA-RuvB allows RuvC to scan DNA until it finds its consensus sequence, where it cleaves and resolves the cruciform DNA. The chain is Crossover junction endodeoxyribonuclease RuvC from Aeromonas hydrophila subsp. hydrophila (strain ATCC 7966 / DSM 30187 / BCRC 13018 / CCUG 14551 / JCM 1027 / KCTC 2358 / NCIMB 9240 / NCTC 8049).